Here is a 234-residue protein sequence, read N- to C-terminus: Carboxy-S-adenosyl-L-methionine synthase (234 aa).

S-adenosyl-L-methionine-binding positions include Tyr35, 60–62, 109–110, Asn124, and Arg191; these read GCS and DV.

The protein belongs to the class I-like SAM-binding methyltransferase superfamily. Cx-SAM synthase family. In terms of assembly, homodimer.

The enzyme catalyses prephenate + S-adenosyl-L-methionine = carboxy-S-adenosyl-L-methionine + 3-phenylpyruvate + H2O. In terms of biological role, catalyzes the conversion of S-adenosyl-L-methionine (SAM) to carboxy-S-adenosyl-L-methionine (Cx-SAM). This Campylobacter curvus (strain 525.92) protein is Carboxy-S-adenosyl-L-methionine synthase.